A 299-amino-acid polypeptide reads, in one-letter code: HTH-type transcriptional regulator CrgA (299 aa).

Residues 1 to 60 form the HTH lysR-type domain; it reads MKTNSEELTVFVQVVESGSFSRAAEQLAMANSAVSRIVKRLEEKLGVNLLNRTTRQLSLT. The segment at residues 20 to 39 is a DNA-binding region (H-T-H motif); sequence FSRAAEQLAMANSAVSRIVK.

This sequence belongs to the LysR transcriptional regulatory family. Forms oligomers. Oligomerization is required for DNA binding.

Functionally, involved in the regulation of bacterial adhesion to host epithelial cells. May play a central regulatory role in meningococcal adhesion, particularly in switching from initial adhesion to intimate adhesion by downregulating the bacterial surface structures that hinder this adhesion. During intimate adhesion, negatively regulates the expression of pilC1, encoding a pilus-associated protein, pilE, encoding the pilin, and sia genes, encoding the capsule. Also negatively regulates its own expression. May also regulate other genes that are involved in intimate adhesion. Binds specifically to the promoter region of pilC1 and crgA (both harboring a CREN element), and pilE and sia (both devoid of a CREN element). Acts through interaction with RNA polymerase (RNAP). Interaction with RNAP leads to the production of short abortive transcripts, suggesting that CrgA may act by preventing RNAP from clearing the promoter. The chain is HTH-type transcriptional regulator CrgA from Neisseria meningitidis serogroup C (strain 8013).